Here is an 887-residue protein sequence, read N- to C-terminus: Ubiquitin carboxyl-terminal hydrolase 4 (887 aa).

The Rhodanese domain occupies 202–328; it reads KEDSLLLIDV…WIKNGGEIDK (127 aa). 2 disordered regions span residues 358–465 and 484–505; these read AFPD…PKPP and QKQNRSRSLEPQLPPIPSTLIR. The span at 387 to 402 shows a compositional bias: polar residues; it reads TPPNGSSTLGRINSPV. The 361-residue stretch at 525 to 885 folds into the USP domain; the sequence is VGLENMGNSC…SAYVLFYHRI (361 aa). The active-site Nucleophile is Cys534. The active-site Proton acceptor is His842.

Belongs to the peptidase C19 family.

It is found in the cytoplasm. Its subcellular location is the late endosome membrane. It carries out the reaction Thiol-dependent hydrolysis of ester, thioester, amide, peptide and isopeptide bonds formed by the C-terminal Gly of ubiquitin (a 76-residue protein attached to proteins as an intracellular targeting signal).. With respect to regulation, RFU1 is an inhibitor of deubiquitination activity. Ubiquitin thioesterase that acts at the late endosome/prevacuolar compartment to recover ubiquitin from ubiquitinated membrane proteins en route to the vacuole. Also removes ubiquitin from soluble proteins targeted to proteasomes. Is essential to maintain a normal level of free ubiquitin. Required for promoting coordination of DNA replication and avoids DNA overreplication. The chain is Ubiquitin carboxyl-terminal hydrolase 4 (DOA4) from Candida glabrata (strain ATCC 2001 / BCRC 20586 / JCM 3761 / NBRC 0622 / NRRL Y-65 / CBS 138) (Yeast).